Consider the following 83-residue polypeptide: RNA-binding protein Hfq (83 aa).

The Sm domain occupies D9–I69.

This sequence belongs to the Hfq family. As to quaternary structure, homohexamer.

RNA chaperone that binds small regulatory RNA (sRNAs) and mRNAs to facilitate mRNA translational regulation in response to envelope stress, environmental stress and changes in metabolite concentrations. Also binds with high specificity to tRNAs. This chain is RNA-binding protein Hfq, found in Leptospira biflexa serovar Patoc (strain Patoc 1 / Ames).